A 484-amino-acid polypeptide reads, in one-letter code: ATP-dependent RNA helicase DDX25 (484 aa).

Position 49 is a phosphothreonine (Thr49). Residues 62–75 (LAANSLLNKLIRQS) carry the Nuclear export signal motif. A Q motif motif is present at residues 98–126 (KTFEELRLKEELLKGIYAMGFNRPSKIQE). The Nuclear localization signal signature appears at 101 to 115 (EELRLKEELLKGIYA). The Helicase ATP-binding domain maps to 131–301 (MMLAHPPQNL…ERIIPDPNVI (171 aa)). 144–151 (SQSGTGKT) provides a ligand contact to ATP. Residues 248–251 (DEAD) carry the DEAD box motif. The Helicase C-terminal domain maps to 312-479 (NIRQYYVLCE…QLDPEDMDEI (168 aa)).

The protein belongs to the DEAD box helicase family. Post-translationally, phosphorylated on threonine residues. The phosphorylated form is found in the cytoplasm but not in the nucleus. As to expression, isoform 1 is expressed in germ cells. Isoform 2 is expressed in Leydig cells and in round spermatids of adult testis upon gonadotropin stimulation.

The protein resides in the cytoplasm. The protein localises to the nucleus. The enzyme catalyses ATP + H2O = ADP + phosphate + H(+). ATP-dependent RNA helicase. Required for mRNA export and translation regulation during spermatid development. The polypeptide is ATP-dependent RNA helicase DDX25 (Ddx25) (Mus musculus (Mouse)).